The sequence spans 231 residues: Ribosyldihydronicotinamide dehydrogenase [quinone] (231 aa).

FAD-binding positions include histidine 12 and 18–21; that span reads FNGS. At serine 80 the chain carries Phosphoserine. FAD is bound at residue 104-107; that stretch reads LYWF. Residue 127-129 participates in substrate binding; that stretch reads FDI. FAD contacts are provided by residues 148-151 and tyrosine 156; that span reads TTGG. Histidine 174 and histidine 178 together coordinate Zn(2+). Glutamate 194 is an FAD binding site. Position 197 is a phosphoserine (serine 197). FAD is bound at residue arginine 201. A Zn(2+)-binding site is contributed by cysteine 223.

Belongs to the NAD(P)H dehydrogenase (quinone) family. Homodimer. Zn(2+) is required as a cofactor. Requires FAD as cofactor.

The protein resides in the cytoplasm. The enzyme catalyses 1-(beta-D-ribofuranosyl)-1,4-dihydronicotinamide + a quinone + H(+) = beta-nicotinamide D-riboside + a quinol. The enzyme apparently serves as a quinone reductase in connection with conjugation reactions of hydroquinones involved in detoxification pathways as well as in biosynthetic processes such as the vitamin K-dependent gamma-carboxylation of glutamate residues in prothrombin synthesis. The sequence is that of Ribosyldihydronicotinamide dehydrogenase [quinone] (NQO2) from Pongo abelii (Sumatran orangutan).